The following is a 317-amino-acid chain: MPMQGAQRRLLGSLNSIPTATPNLGLAANHTGAPCLEVSIPDWLFLSLGLVSLVQNVLVVAAIAKNRNLHSPMYCFICCLALSDLLVSGSNMLETAVILMLEAGALATRASVVQQLQNTIDVLTCSSMLCSLCFLGAIALDRYVSIFYALRYHSIVTLPRARRAIAATWVASVLSSTLFIAYCDHAAVLLCLVVFFLAMLVLMAVLYVHMLARACQHAQGITRLHKRQLPAHQGFGLRGAATLTILLGIFFLCWGPFFLHLMLVVLCPQHLTCSCIFKNFKVFLTLIICNTIIDPLIYAFRSQELCRTLKEVLLCSW.

Residues 1 to 37 lie on the Extracellular side of the membrane; it reads MPMQGAQRRLLGSLNSIPTATPNLGLAANHTGAPCLE. Residue Asn29 is glycosylated (N-linked (GlcNAc...) asparagine). Residues 38–63 traverse the membrane as a helical segment; it reads VSIPDWLFLSLGLVSLVQNVLVVAAI. The Cytoplasmic portion of the chain corresponds to 64–72; that stretch reads AKNRNLHSP. Residues 73-93 traverse the membrane as a helical segment; sequence MYCFICCLALSDLLVSGSNML. Over 94–118 the chain is Extracellular; that stretch reads ETAVILMLEAGALATRASVVQQLQN. The helical transmembrane segment at 119–140 threads the bilayer; it reads TIDVLTCSSMLCSLCFLGAIAL. Topologically, residues 141–163 are cytoplasmic; that stretch reads DRYVSIFYALRYHSIVTLPRARR. The chain crosses the membrane as a helical span at residues 164-183; sequence AIAATWVASVLSSTLFIAYC. The Extracellular portion of the chain corresponds to 184-191; sequence DHAAVLLC. Residues 192–211 traverse the membrane as a helical segment; sequence LVVFFLAMLVLMAVLYVHML. Residues 212 to 240 lie on the Cytoplasmic side of the membrane; that stretch reads ARACQHAQGITRLHKRQLPAHQGFGLRGA. Residues 241–266 form a helical membrane-spanning segment; the sequence is ATLTILLGIFFLCWGPFFLHLMLVVL. Residues 267 to 279 are Extracellular-facing; sequence CPQHLTCSCIFKN. A helical transmembrane segment spans residues 280–300; it reads FKVFLTLIICNTIIDPLIYAF. Topologically, residues 301 to 317 are cytoplasmic; the sequence is RSQELCRTLKEVLLCSW. Cys315 is lipidated: S-palmitoyl cysteine.

Belongs to the G-protein coupled receptor 1 family. As to quaternary structure, interacts with MGRN1, but does not undergo MGRN1-mediated ubiquitination; this interaction competes with GNAS-binding and thus inhibits agonist-induced cAMP production. Interacts with OPN3; the interaction results in a decrease in MC1R-mediated cAMP signaling and ultimately a decrease in melanin production in melanocytes.

The protein localises to the cell membrane. In terms of biological role, receptor for MSH (alpha, beta and gamma) and ACTH. The activity of this receptor is mediated by G proteins which activate adenylate cyclase. Mediates melanogenesis, the production of eumelanin (black/brown) and phaeomelanin (red/yellow), via regulation of cAMP signaling in melanocytes. The chain is Melanocyte-stimulating hormone receptor (MC1R) from Alouatta seniculus (Red howler monkey).